A 64-amino-acid polypeptide reads, in one-letter code: Large ribosomal subunit protein bL35 (64 aa).

The segment at 1-23 (MPKMKTKSGAAKRFKKTANGFKH) is disordered.

This sequence belongs to the bacterial ribosomal protein bL35 family.

This is Large ribosomal subunit protein bL35 from Stutzerimonas stutzeri (strain A1501) (Pseudomonas stutzeri).